The primary structure comprises 396 residues: MAKEKFERTKPHVNVGTIGHVDHGKTTLTAAIATVLAAKFGGAAKKYDEIDAAPEEKARGITINTAHVEYETANRHYAHVDCPGHADYVKNMITGAAQMDGAILVCSAADGPMPQTREHILLARQVGVPYIIVFLNKCDMVDDAELLELVEMEVRELLSKYEFPGDDTPIIKGSAKLALEGDKGELGEVAIMNLADALDTYIPTPERAVDGTFLMPVEDVFSISGRGTVVTGRIERGVIKVGEEIEIVGIRPTVKTTCTGVEMFRKLLDQGQAGDNVGLLLRGTKREDVERGQVLCKPGSIKPHTHFTGEVYILSKDEGGRHTPFFNNYRPQFYFRTTDVTGSIELPADKEMVMPGDNVSITVKLIAPIAMEEGLRFAIREGGRTVGAGVVAKILD.

The region spanning 10–206 is the tr-type G domain; sequence KPHVNVGTIG…ALDTYIPTPE (197 aa). Positions 19–26 are G1; sequence GHVDHGKT. Position 19 to 26 (19 to 26) interacts with GTP; it reads GHVDHGKT. Thr-26 is a binding site for Mg(2+). Residues 60–64 are G2; sequence GITIN. Positions 81–84 are G3; the sequence is DCPG. GTP is bound by residues 81-85 and 136-139; these read DCPGH and NKCD. The G4 stretch occupies residues 136 to 139; the sequence is NKCD. The interval 174-176 is G5; that stretch reads SAK.

Belongs to the TRAFAC class translation factor GTPase superfamily. Classic translation factor GTPase family. EF-Tu/EF-1A subfamily. As to quaternary structure, monomer.

The protein localises to the cytoplasm. The catalysed reaction is GTP + H2O = GDP + phosphate + H(+). GTP hydrolase that promotes the GTP-dependent binding of aminoacyl-tRNA to the A-site of ribosomes during protein biosynthesis. In Cupriavidus pinatubonensis (strain JMP 134 / LMG 1197) (Cupriavidus necator (strain JMP 134)), this protein is Elongation factor Tu.